The following is a 457-amino-acid chain: C4-dicarboxylate transport protein (457 aa).

9 helical membrane passes run 22 to 42 (FQVV…PAFA), 55 to 75 (LVKM…IAGM), 90 to 110 (VYFL…AHVV), 138 to 158 (LTLV…AFTG), 168 to 188 (GPNI…LALV), 209 to 229 (LVHI…AFTI), 242 to 262 (WLVG…LGVV), 335 to 357 (LFIA…LAVA), and 376 to 396 (AATL…ILGV).

This sequence belongs to the dicarboxylate/amino acid:cation symporter (DAACS) (TC 2.A.23) family.

It localises to the cell inner membrane. Functionally, responsible for the transport of dicarboxylates such as succinate, fumarate, and malate from the periplasm across the membrane. This Xanthomonas oryzae pv. oryzae (strain MAFF 311018) protein is C4-dicarboxylate transport protein.